A 397-amino-acid chain; its full sequence is Argininosuccinate synthase (397 aa).

Position 8 to 16 (8 to 16 (AYSGGLDTS)) interacts with ATP. 2 residues coordinate L-citrulline: Tyr86 and Ser91. Gly116 provides a ligand contact to ATP. L-aspartate-binding residues include Thr118, Asn122, and Asp123. Asn122 is an L-citrulline binding site. L-citrulline-binding residues include Arg126, Ser175, Ser184, Glu260, and Tyr272.

Belongs to the argininosuccinate synthase family. Type 1 subfamily. As to quaternary structure, homotetramer.

It is found in the cytoplasm. The catalysed reaction is L-citrulline + L-aspartate + ATP = 2-(N(omega)-L-arginino)succinate + AMP + diphosphate + H(+). The protein operates within amino-acid biosynthesis; L-arginine biosynthesis; L-arginine from L-ornithine and carbamoyl phosphate: step 2/3. This chain is Argininosuccinate synthase, found in Clostridium botulinum (strain Langeland / NCTC 10281 / Type F).